A 171-amino-acid chain; its full sequence is UPF0763 protein Hac_0849 (171 aa).

It belongs to the UPF0763 family.

This Helicobacter acinonychis (strain Sheeba) protein is UPF0763 protein Hac_0849.